A 1496-amino-acid chain; its full sequence is Chromosome partition protein MukB (1496 aa).

An ATP-binding site is contributed by 63-70; that stretch reads GGNGAGKS. 2 coiled-coil regions span residues 328 to 493 and 536 to 632; these read KLEL…QRLS and KMQA…APAW. A flexible hinge region spans residues 694–811; that stretch reads PDGSDDVRLN…EVPLFGRAAR (118 aa). Coiled coils occupy residues 861 to 1171 and 1235 to 1291; these read NPEE…SAEE and IDAI…LQNI. Basic and acidic residues predominate over residues 1082-1091; the sequence is RARSRRDELQ. The interval 1082–1101 is disordered; that stretch reads RARSRRDELQQRLSQQRSRK.

This sequence belongs to the SMC family. MukB subfamily. In terms of assembly, homodimerization via its hinge domain. Binds to DNA via its C-terminal region. Interacts, and probably forms a ternary complex, with MukE and MukF via its C-terminal region. The complex formation is stimulated by calcium or magnesium. Interacts with tubulin-related protein FtsZ.

The protein resides in the cytoplasm. Its subcellular location is the nucleoid. Functionally, plays a central role in chromosome condensation, segregation and cell cycle progression. Functions as a homodimer, which is essential for chromosome partition. Involved in negative DNA supercoiling in vivo, and by this means organize and compact chromosomes. May achieve or facilitate chromosome segregation by condensation DNA from both sides of a centrally located replisome during cell division. In Actinobacillus pleuropneumoniae serotype 7 (strain AP76), this protein is Chromosome partition protein MukB.